The sequence spans 366 residues: Quinolinate synthase (366 aa).

Residues histidine 44 and serine 61 each coordinate iminosuccinate. Cysteine 108 contacts [4Fe-4S] cluster. Residues 139–141 (YIN) and serine 160 each bind iminosuccinate. Cysteine 228 serves as a coordination point for [4Fe-4S] cluster. Residues 254-256 (HPE) and threonine 271 each bind iminosuccinate. Cysteine 318 is a [4Fe-4S] cluster binding site.

This sequence belongs to the quinolinate synthase family. Type 3 subfamily. It depends on [4Fe-4S] cluster as a cofactor.

Its subcellular location is the cytoplasm. It carries out the reaction iminosuccinate + dihydroxyacetone phosphate = quinolinate + phosphate + 2 H2O + H(+). Its pathway is cofactor biosynthesis; NAD(+) biosynthesis; quinolinate from iminoaspartate: step 1/1. Catalyzes the condensation of iminoaspartate with dihydroxyacetone phosphate to form quinolinate. This chain is Quinolinate synthase, found in Listeria innocua serovar 6a (strain ATCC BAA-680 / CLIP 11262).